Here is a 429-residue protein sequence, read N- to C-terminus: Histidine--tRNA ligase (429 aa).

The protein belongs to the class-II aminoacyl-tRNA synthetase family. As to quaternary structure, homodimer.

The protein localises to the cytoplasm. The enzyme catalyses tRNA(His) + L-histidine + ATP = L-histidyl-tRNA(His) + AMP + diphosphate + H(+). This Cyanothece sp. (strain PCC 7425 / ATCC 29141) protein is Histidine--tRNA ligase.